We begin with the raw amino-acid sequence, 336 residues long: Aspartate--ammonia ligase (336 aa).

Belongs to the class-II aminoacyl-tRNA synthetase family. AsnA subfamily.

The protein localises to the cytoplasm. The catalysed reaction is L-aspartate + NH4(+) + ATP = L-asparagine + AMP + diphosphate + H(+). It participates in amino-acid biosynthesis; L-asparagine biosynthesis; L-asparagine from L-aspartate (ammonia route): step 1/1. This Clostridium perfringens (strain 13 / Type A) protein is Aspartate--ammonia ligase.